A 469-amino-acid chain; its full sequence is Probable glucuronoxylan glucuronosyltransferase F8H (469 aa).

Residues 1-36 (MSLDIKKPNITKTKKKKTGFVVKMQLNNNRGGNKRN) lie on the Cytoplasmic side of the membrane. The chain crosses the membrane as a helical; Signal-anchor for type II membrane protein span at residues 37–57 (IFIFFFFRNYYTWILWFCLSL). Topologically, residues 58–469 (YFFTSYFSVE…RVLSQREVDM (412 aa)) are lumenal. Residues Asn171, Asn203, Asn301, and Asn411 are each glycosylated (N-linked (GlcNAc...) asparagine).

The protein belongs to the glycosyltransferase 47 family. In terms of tissue distribution, expressed in xylem cells in stems and in roots.

It is found in the golgi apparatus membrane. Functionally, involved in the synthesis of the hemicellulose glucuronoxylan, a major component of secondary cell walls. Probably involved in the synthesis of the glycosyl sequence at the glucuronoxylan reducing end. This is Probable glucuronoxylan glucuronosyltransferase F8H (F8H) from Arabidopsis thaliana (Mouse-ear cress).